An 831-amino-acid chain; its full sequence is Cadherin-related family member 5 (831 aa).

Positions 1–28 (MGAPALLWPSLLLPWLTVLFGQPPGTLA) are cleaved as a signal peptide. Over 29 to 641 (QTQVCSVNQT…GQRFSTVDMA (613 aa)) the chain is Extracellular. 11 N-linked (GlcNAc...) asparagine glycosylation sites follow: Asn-36, Asn-45, Asn-84, Asn-135, Asn-143, Asn-173, Asn-201, Asn-287, Asn-311, Asn-408, and Asn-475. 4 Cadherin domains span residues 53–125 (VNIF…DNAP), 128–240 (SFEI…TPWF), 252–357 (IHAQ…PLQF), and 358–459 (SQSL…ERER). The segment at 452-632 (IQVSERERTP…STGAGEQGDG (181 aa)) is disordered. Over residues 473 to 491 (SSNTTMEAPLTSGTSQRPA) the composition is skewed to polar residues. Low complexity predominate over residues 505–540 (GGTTLRPPTPASSIPGGSPTLGTSTSPQTTTPGGDS). Residues 541-554 (AQTPKPGTSHPTAP) are compositionally biased toward polar residues. 2 consecutive repeat copies span residues 541-571 (AQTP…RSDS) and 572-602 (TQTP…SGSS). The segment at 541–614 (AQTPKPGTSH…TPKPGTSQST (74 aa)) is 3 X 31 AA approximate tandem repeats. Low complexity predominate over residues 555-572 (TSRTSTSLMTTSSRSDST). Composition is skewed to polar residues over residues 573-582 (QTPKPGTSQP) and 589-623 (ASTS…SLPS). The 3; truncated repeat unit spans residues 605–614 (TPKPGTSQST). Residues 642–662 (VLGGVLGALLLLALICLVILV) traverse the membrane as a helical segment. Topologically, residues 663–831 (HKHYRHRLAC…FGVDADNTYI (169 aa)) are cytoplasmic. Residues 663 to 831 (HKHYRHRLAC…FGVDADNTYI (169 aa)) form a mediates interaction with USH1C and MYO7B and is required for proper localization to microvilli tips and function in microvilli organization region. 2 disordered regions span residues 675–774 (GKAS…GGYK) and 793–831 (EPTA…NTYI). Phosphoserine is present on residues Ser-699, Ser-721, and Ser-725. Pro residues predominate over residues 716-738 (PLRPPSPMSSSPTPPSSTPPSPQ). The residue at position 728 (Thr-728) is a Phosphothreonine. Phosphoserine occurs at positions 736 and 753. The span at 761 to 771 (LTKERRPEGEG) shows a compositional bias: basic and acidic residues. Thr-795 is modified (phosphothreonine). Over residues 797 to 807 (DVDSASASGSE) the composition is skewed to low complexity. Phosphoserine is present on residues Ser-802, Ser-804, and Ser-806.

Part of the IMAC/intermicrovillar adhesion complex/intermicrovillar tip-link complex composed of ANKS4B, MYO7B, USH1C, CDHR2 and CDHR5. Interacts (via cytoplasmic domain) with USH1C and MYO7B; required for proper localization of CDHR5 to microvilli tips and its function in brush border differentiation. In terms of processing, N- and O-glycosylated.

The protein localises to the apical cell membrane. Its subcellular location is the cell projection. The protein resides in the microvillus membrane. In terms of biological role, intermicrovillar adhesion molecule that forms, via its extracellular domain, calcium-dependent heterophilic complexes with CDHR2 on adjacent microvilli. Thereby, controls the packing of microvilli at the apical membrane of epithelial cells. Through its cytoplasmic domain, interacts with microvillus cytoplasmic proteins to form the intermicrovillar adhesion complex/IMAC. This complex plays a central role in microvilli and epithelial brush border differentiation. The protein is Cadherin-related family member 5 of Mus musculus (Mouse).